Reading from the N-terminus, the 483-residue chain is Ribulose bisphosphate carboxylase large chain (483 aa).

Positions M1–S2 are excised as a propeptide. Positions 123 and 173 each coordinate substrate. K175 serves as the catalytic Proton acceptor. K177 contributes to the substrate binding site. 3 residues coordinate Mg(2+): K201, D203, and E204. N6-carboxylysine is present on K201. Position 208 is a phosphoserine (S208). H294 functions as the Proton acceptor in the catalytic mechanism. Positions 295 and 327 each coordinate substrate. T330 is subject to Phosphothreonine. Position 379 (S379) interacts with substrate.

It belongs to the RuBisCO large chain family. Type I subfamily. As to quaternary structure, heterohexadecamer of 8 large chains and 8 small chains; disulfide-linked. The disulfide link is formed within the large subunit homodimers. The cofactor is Mg(2+). Post-translationally, the disulfide bond which can form in the large chain dimeric partners within the hexadecamer appears to be associated with oxidative stress and protein turnover.

The protein localises to the plastid. It is found in the chloroplast. The enzyme catalyses 2 (2R)-3-phosphoglycerate + 2 H(+) = D-ribulose 1,5-bisphosphate + CO2 + H2O. It catalyses the reaction D-ribulose 1,5-bisphosphate + O2 = 2-phosphoglycolate + (2R)-3-phosphoglycerate + 2 H(+). RuBisCO catalyzes two reactions: the carboxylation of D-ribulose 1,5-bisphosphate, the primary event in carbon dioxide fixation, as well as the oxidative fragmentation of the pentose substrate in the photorespiration process. Both reactions occur simultaneously and in competition at the same active site. The polypeptide is Ribulose bisphosphate carboxylase large chain (Aethionema cordifolium (Lebanon stonecress)).